We begin with the raw amino-acid sequence, 102 residues long: NAD(P)H-quinone oxidoreductase subunit 4L (102 aa).

Transmembrane regions (helical) follow at residues 4–24 (LQFF…GLIV), 33–53 (MSIE…SNFV), and 65–85 (VFVI…VLGI).

Belongs to the complex I subunit 4L family. In terms of assembly, NDH-1 can be composed of about 15 different subunits; different subcomplexes with different compositions have been identified which probably have different functions.

The protein resides in the cellular thylakoid membrane. The enzyme catalyses a plastoquinone + NADH + (n+1) H(+)(in) = a plastoquinol + NAD(+) + n H(+)(out). It catalyses the reaction a plastoquinone + NADPH + (n+1) H(+)(in) = a plastoquinol + NADP(+) + n H(+)(out). NDH-1 shuttles electrons from an unknown electron donor, via FMN and iron-sulfur (Fe-S) centers, to quinones in the respiratory and/or the photosynthetic chain. The immediate electron acceptor for the enzyme in this species is believed to be plastoquinone. Couples the redox reaction to proton translocation, and thus conserves the redox energy in a proton gradient. Cyanobacterial NDH-1 also plays a role in inorganic carbon-concentration. This Synechococcus sp. (strain JA-3-3Ab) (Cyanobacteria bacterium Yellowstone A-Prime) protein is NAD(P)H-quinone oxidoreductase subunit 4L.